The sequence spans 394 residues: Elongation factor Tu (394 aa).

The region spanning 10–204 (KPHINIGTIG…AVDDNIPTPE (195 aa)) is the tr-type G domain. A G1 region spans residues 19-26 (GHVDHGKT). Residue 19-26 (GHVDHGKT) coordinates GTP. T26 serves as a coordination point for Mg(2+). Residues 60 to 64 (GITIN) form a G2 region. Positions 81–84 (DCPG) are G3. GTP is bound by residues 81-85 (DCPGH) and 136-139 (NKID). Residues 136-139 (NKID) form a G4 region. The tract at residues 174–176 (SAL) is G5.

This sequence belongs to the TRAFAC class translation factor GTPase superfamily. Classic translation factor GTPase family. EF-Tu/EF-1A subfamily. Monomer.

Its subcellular location is the cytoplasm. The enzyme catalyses GTP + H2O = GDP + phosphate + H(+). GTP hydrolase that promotes the GTP-dependent binding of aminoacyl-tRNA to the A-site of ribosomes during protein biosynthesis. The polypeptide is Elongation factor Tu (Chlamydia caviae (strain ATCC VR-813 / DSM 19441 / 03DC25 / GPIC) (Chlamydophila caviae)).